Consider the following 242-residue polypeptide: Sugar fermentation stimulation protein homolog (242 aa).

Belongs to the SfsA family.

This chain is Sugar fermentation stimulation protein homolog, found in Methanosphaera stadtmanae (strain ATCC 43021 / DSM 3091 / JCM 11832 / MCB-3).